We begin with the raw amino-acid sequence, 205 residues long: Glycerol-3-phosphate acyltransferase (205 aa).

The next 5 membrane-spanning stretches (helical) occupy residues 4–24 (IAPGLVLLAYLCGSISSAILV), 80–100 (PFWLGLVAIAACVGHIWPVFF), 107–127 (GVATAFGAIAPIGLDLTGVMA), 130–150 (WLLTILLSGYSSLGAIVSALI), and 155–175 (VWWFKPQYTFPVSMLSCLILL).

This sequence belongs to the PlsY family. In terms of assembly, probably interacts with PlsX.

The protein resides in the cell inner membrane. It catalyses the reaction an acyl phosphate + sn-glycerol 3-phosphate = a 1-acyl-sn-glycero-3-phosphate + phosphate. The protein operates within lipid metabolism; phospholipid metabolism. In terms of biological role, catalyzes the transfer of an acyl group from acyl-phosphate (acyl-PO(4)) to glycerol-3-phosphate (G3P) to form lysophosphatidic acid (LPA). This enzyme utilizes acyl-phosphate as fatty acyl donor, but not acyl-CoA or acyl-ACP. This chain is Glycerol-3-phosphate acyltransferase, found in Klebsiella pneumoniae (strain 342).